Consider the following 398-residue polypeptide: AT-rich interactive domain-containing protein 6 (398 aa).

The disordered stretch occupies residues 25–87 (EPLEPENDHN…PKTEGENAKK (63 aa)). In terms of domain architecture, ARID spans 106–197 (PVEQVAFLRE…ALLEYEKCLR (92 aa)). The interval 213–236 (SSVEKEPSSHQGSGSGRARRDSAA) is disordered. Residues 305-398 (VGPVADWVKI…RLFIRVPFEQ (94 aa)) enclose the sHSP domain.

The protein belongs to the small heat shock protein (HSP20) family.

It is found in the nucleus. The protein is AT-rich interactive domain-containing protein 6 (ARID6) of Arabidopsis thaliana (Mouse-ear cress).